The primary structure comprises 316 residues: Small ribosomal subunit biogenesis GTPase RsgA (316 aa).

The CP-type G domain occupies 83-248 (DQYKSKLFAA…LIDSPGFQEF (166 aa)). GTP is bound by residues 131–134 (NKTD) and 185–193 (GQSGMGKST). Residues C272, C277, H279, and C285 each coordinate Zn(2+).

It belongs to the TRAFAC class YlqF/YawG GTPase family. RsgA subfamily. In terms of assembly, monomer. Associates with 30S ribosomal subunit, binds 16S rRNA. The cofactor is Zn(2+).

The protein resides in the cytoplasm. Functionally, one of several proteins that assist in the late maturation steps of the functional core of the 30S ribosomal subunit. Helps release RbfA from mature subunits. May play a role in the assembly of ribosomal proteins into the subunit. Circularly permuted GTPase that catalyzes slow GTP hydrolysis, GTPase activity is stimulated by the 30S ribosomal subunit. This chain is Small ribosomal subunit biogenesis GTPase RsgA, found in Paraburkholderia xenovorans (strain LB400).